The primary structure comprises 103 residues: Large ribosomal subunit protein bL21 (103 aa).

This sequence belongs to the bacterial ribosomal protein bL21 family. Part of the 50S ribosomal subunit. Contacts protein L20.

Its function is as follows. This protein binds to 23S rRNA in the presence of protein L20. This is Large ribosomal subunit protein bL21 from Erwinia tasmaniensis (strain DSM 17950 / CFBP 7177 / CIP 109463 / NCPPB 4357 / Et1/99).